The primary structure comprises 147 residues: UPF0460 protein in nifX-nifW intergenic region (147 aa).

This sequence belongs to the UPF0460 family.

This Frankia alni protein is UPF0460 protein in nifX-nifW intergenic region.